The following is a 124-amino-acid chain: Snaclec rhodocetin subunit delta (124 aa).

Intrachain disulfides connect Cys1-Cys12, Cys29-Cys120, and Cys95-Cys112. One can recognise a C-type lectin domain in the interval 8 to 121; sequence YNGYCYRVFS…CEKTVSFVCK (114 aa).

This sequence belongs to the snaclec family. In terms of assembly, heterotetramer of subunit alpha, beta, gamma and delta; only the gamma and the delta subunits are disulfide-linked. Alpha-beta heterodimer and gamma-delta heterodimer associate orthogonally, giving a cruciform conformation. This heterotetramer may covalently dimerizes thanks to the gamma subunit. As to expression, expressed by the venom gland.

It localises to the secreted. Potent inhibitor of collagen-induced platelet aggregation. It acts by binding to the integrin alpha2A domain and blocks collagen binding to integrin alpha-2/beta-1 (ITGA2/ITGB1). The gamma/delta subunits mainly contribute to this activity. This Calloselasma rhodostoma (Malayan pit viper) protein is Snaclec rhodocetin subunit delta.